Reading from the N-terminus, the 743-residue chain is GTPase-activating protein gyp7 (743 aa).

A Rab-GAP TBC domain is found at 411–633; sequence GIQPSLRKEV…KLWDVLFTNY (223 aa).

The protein localises to the cytoplasm. The protein resides in the nucleus. Functionally, most effectively accelerates the intrinsic GTPase activity of ypt7. This chain is GTPase-activating protein gyp7, found in Schizosaccharomyces pombe (strain 972 / ATCC 24843) (Fission yeast).